Consider the following 295-residue polypeptide: MNVGKKSEIQVSAKSNLNFLNELIEEKKRYEDEKRKISHQKYTDKLLEANDNETTKRKLLVKQKRKSNKEFQSNIIKKRKDEERKGTLKTEQANEEELLQRSRLELERKAKKYDQYAAGELEIKETEDDGILVDFTRKWAEEAPENETVEITDEFGRTRSVSIYETGNTLLSQKEEYKPEKPIYGDYMPSFEVDEEKVQKLWKEDEQQAVHYDSTKEVRNKGTAFYQFSFDEKEREEQLLSLKEIHAKVTQQQRKNTEDVLTLRDKKLEERRKFLERDYAIKLGERWMSEHFSNN.

Positions 57–67 (RKLLVKQKRKS) are enriched in basic residues. Positions 57 to 94 (RKLLVKQKRKSNKEFQSNIIKKRKDEERKGTLKTEQAN) are disordered. The segment covering 79–88 (RKDEERKGTL) has biased composition (basic and acidic residues). 2 coiled-coil regions span residues 87 to 116 (TLKT…YDQY) and 259 to 286 (DVLT…LGER).

The protein localises to the nucleus. This is an uncharacterized protein from Schizosaccharomyces pombe (strain 972 / ATCC 24843) (Fission yeast).